Reading from the N-terminus, the 1709-residue chain is Acrosomal protein KIAA1210 (1709 aa).

Disordered regions lie at residues 207-226 (PVRE…GSKA), 239-275 (PERS…SKVP), 451-663 (PNLD…AEKT), 763-973 (PPRS…MAVE), 1211-1382 (LKRG…SVNA), 1408-1516 (TKKF…GRGH), 1539-1571 (ADKQ…QSDY), and 1589-1653 (FKAH…KSVG). Residues 257–272 (PQQRSHISRTLPKPRS) show a composition bias toward basic residues. Residues 473–490 (EEEKSITKPKEINEKKLG) show a composition bias toward basic and acidic residues. 2 stretches are compositionally biased toward polar residues: residues 494–505 (ADSSSQKQNNKT) and 514–527 (DQAP…SQGY). The segment covering 595 to 608 (EQPTTSQPETTTPQ) has biased composition (low complexity). A compositionally biased stretch (basic and acidic residues) spans 651 to 663 (PYHEDAASGAEKT). Positions 777–794 (EEVSSDSENIPEEGDGSE) are enriched in acidic residues. Composition is skewed to polar residues over residues 886-941 (KNQQ…QSDS), 1288-1299 (FKEQLSPRQLSQ), 1332-1350 (HSSQ…SSKG), 1366-1376 (PSSSPFQQQVH), and 1457-1469 (DGNN…LSNQ). The span at 1502-1513 (SVPSGPISSSVG) shows a compositional bias: low complexity. A compositionally biased stretch (basic and acidic residues) spans 1542–1552 (QQSRPKSESMA).

As to quaternary structure, interacts with TOP2B.

The protein resides in the cytoplasmic vesicle. The protein localises to the secretory vesicle. It is found in the acrosome. This Homo sapiens (Human) protein is Acrosomal protein KIAA1210.